Consider the following 107-residue polypeptide: UPF0145 protein CHY_0465 (107 aa).

Belongs to the UPF0145 family.

The sequence is that of UPF0145 protein CHY_0465 from Carboxydothermus hydrogenoformans (strain ATCC BAA-161 / DSM 6008 / Z-2901).